The sequence spans 426 residues: Serine hydroxymethyltransferase (426 aa).

(6S)-5,6,7,8-tetrahydrofolate-binding positions include Leu-113 and 117-119; that span reads GHL. Residue Lys-222 is modified to N6-(pyridoxal phosphate)lysine. 363 to 365 is a (6S)-5,6,7,8-tetrahydrofolate binding site; the sequence is SAF.

The protein belongs to the SHMT family. In terms of assembly, homodimer. Pyridoxal 5'-phosphate serves as cofactor.

It localises to the cytoplasm. It carries out the reaction (6R)-5,10-methylene-5,6,7,8-tetrahydrofolate + glycine + H2O = (6S)-5,6,7,8-tetrahydrofolate + L-serine. It participates in one-carbon metabolism; tetrahydrofolate interconversion. The protein operates within amino-acid biosynthesis; glycine biosynthesis; glycine from L-serine: step 1/1. Its function is as follows. Catalyzes the reversible interconversion of serine and glycine with tetrahydrofolate (THF) serving as the one-carbon carrier. This reaction serves as the major source of one-carbon groups required for the biosynthesis of purines, thymidylate, methionine, and other important biomolecules. Also exhibits THF-independent aldolase activity toward beta-hydroxyamino acids, producing glycine and aldehydes, via a retro-aldol mechanism. The sequence is that of Serine hydroxymethyltransferase from Porphyromonas gingivalis (strain ATCC 33277 / DSM 20709 / CIP 103683 / JCM 12257 / NCTC 11834 / 2561).